Reading from the N-terminus, the 419-residue chain is GTPase Obg (419 aa).

Residues 2–159 (SAFVDAVTVE…FLAKVELQVL (158 aa)) form the Obg domain. In terms of domain architecture, OBG-type G spans 160–325 (ADVGLLGYPN…LKYEIATTLK (166 aa)). Residues 166–173 (GYPNVGKS), 191–195 (FTTLS), 212–215 (DLPG), 279–282 (NKMD), and 306–308 (SAL) contribute to the GTP site. Ser-173 and Thr-193 together coordinate Mg(2+). The OCT domain maps to 341-419 (LNAEDAVDFI…IFSYEFEYLE (79 aa)).

Belongs to the TRAFAC class OBG-HflX-like GTPase superfamily. OBG GTPase family. As to quaternary structure, monomer. Mg(2+) is required as a cofactor.

It is found in the cytoplasm. Functionally, an essential GTPase which binds GTP, GDP and possibly (p)ppGpp with moderate affinity, with high nucleotide exchange rates and a fairly low GTP hydrolysis rate. Plays a role in control of the cell cycle, stress response, ribosome biogenesis and in those bacteria that undergo differentiation, in morphogenesis control. This is GTPase Obg from Acholeplasma laidlawii (strain PG-8A).